A 63-amino-acid chain; its full sequence is uncharacterized protein (63 aa).

The N-terminal stretch at 1-21 (MNRALILTFVLFFALFAISSA) is a signal peptide.

This is an uncharacterized protein from Dictyostelium discoideum (Social amoeba).